We begin with the raw amino-acid sequence, 584 residues long: Pentalenolactone D synthase (584 aa).

FAD contacts are provided by residues 55–56, 77–78, 85–86, 97–98, tyrosine 103, valine 147, and methionine 486; these read IG, DG, TW, and DV.

The protein belongs to the FAD-binding monooxygenase family. FAD serves as cofactor.

It carries out the reaction 1-deoxy-11-oxopentalenate + NADPH + O2 + H(+) = pentalenolactone D + NADP(+) + H2O. It functions in the pathway antibiotic biosynthesis; pentalenolactone biosynthesis. In terms of biological role, catalyzes the flavin-dependent Baeyer-Villiger oxidation of 1-deoxy-11-oxopentalenic acid to pentalenolactone D in the biosynthesis of pentalenolactone antibiotic. In Streptomyces exfoliatus (Streptomyces hydrogenans), this protein is Pentalenolactone D synthase (penE).